We begin with the raw amino-acid sequence, 88 residues long: uncharacterized protein (88 aa).

This is an uncharacterized protein from Homo sapiens (Human).